The chain runs to 353 residues: Probable cytochrome c oxidase subunit 2 (353 aa).

Residues 1–42 form the signal peptide; the sequence is MTARELVCSQRVGQGLSRRLRPLVLAVTLGVLVVTLSGCSWS. The next 2 membrane-spanning stretches (helical) occupy residues 63 to 83 and 110 to 130; these read LWIG…GLIF and LVLT…TVIV. 4 residues coordinate Cu cation: histidine 246, cysteine 287, cysteine 291, and histidine 295.

The protein belongs to the cytochrome c oxidase subunit 2 family. Cu cation is required as a cofactor. It depends on heme as a cofactor.

The protein resides in the cell membrane. The enzyme catalyses 4 Fe(II)-[cytochrome c] + O2 + 8 H(+)(in) = 4 Fe(III)-[cytochrome c] + 2 H2O + 4 H(+)(out). Functionally, subunits I and II form the functional core of the enzyme complex. Electrons originating in cytochrome c are transferred via heme a and Cu(A) to the binuclear center formed by heme a3 and Cu(B). The sequence is that of Probable cytochrome c oxidase subunit 2 (ctaC) from Mycobacterium leprae (strain TN).